The following is a 325-amino-acid chain: Oligopeptide transport system permease protein OppB (325 aa).

6 helical membrane-spanning segments follow: residues 12-32 (YLVLLALASFLTYCLTSLAFS), 102-122 (LVVGSVFGTVAGVVIGAWGAI), 135-155 (LALLVLSTPTFVVANLLILGA), 189-208 (LQHLILPSLTLALAAAAGFS), 248-268 (IPMATLFAYGVAGLVTGAVFV), and 290-310 (TNIVAAITVFSGAVVLLAGLL). One can recognise an ABC transmembrane type-1 domain in the interval 95–311 (IGVSLRLLVV…AVVLLAGLLS (217 aa)).

The protein belongs to the binding-protein-dependent transport system permease family. OppBC subfamily. In terms of assembly, the complex is composed of an ATP-binding protein (OppD), two transmembrane proteins (OppB and OppC) and a solute-binding protein (OppA).

The protein resides in the cell inner membrane. In terms of biological role, part of the ABC transporter complex OppABCD involved in the uptake of oligopeptides. Responsible for the translocation of the substrate across the membrane. This chain is Oligopeptide transport system permease protein OppB, found in Mycobacterium bovis (strain ATCC BAA-935 / AF2122/97).